Reading from the N-terminus, the 955-residue chain is Glycine dehydrogenase (decarboxylating) (955 aa).

The residue at position 705 (K705) is an N6-(pyridoxal phosphate)lysine.

The protein belongs to the GcvP family. In terms of assembly, the glycine cleavage system is composed of four proteins: P, T, L and H. It depends on pyridoxal 5'-phosphate as a cofactor.

The catalysed reaction is N(6)-[(R)-lipoyl]-L-lysyl-[glycine-cleavage complex H protein] + glycine + H(+) = N(6)-[(R)-S(8)-aminomethyldihydrolipoyl]-L-lysyl-[glycine-cleavage complex H protein] + CO2. Its function is as follows. The glycine cleavage system catalyzes the degradation of glycine. The P protein binds the alpha-amino group of glycine through its pyridoxal phosphate cofactor; CO(2) is released and the remaining methylamine moiety is then transferred to the lipoamide cofactor of the H protein. The polypeptide is Glycine dehydrogenase (decarboxylating) (Aliivibrio fischeri (strain ATCC 700601 / ES114) (Vibrio fischeri)).